Here is a 168-residue protein sequence, read N- to C-terminus: UPF0304 protein MJECS11 (168 aa).

Belongs to the UPF0304 family.

This Methanocaldococcus jannaschii (strain ATCC 43067 / DSM 2661 / JAL-1 / JCM 10045 / NBRC 100440) (Methanococcus jannaschii) protein is UPF0304 protein MJECS11.